The sequence spans 251 residues: Ubiquinone/menaquinone biosynthesis C-methyltransferase UbiE (251 aa).

S-adenosyl-L-methionine-binding positions include Thr-74, Asp-95, and 123–124; that span reads NA.

It belongs to the class I-like SAM-binding methyltransferase superfamily. MenG/UbiE family.

It catalyses the reaction a 2-demethylmenaquinol + S-adenosyl-L-methionine = a menaquinol + S-adenosyl-L-homocysteine + H(+). It carries out the reaction a 2-methoxy-6-(all-trans-polyprenyl)benzene-1,4-diol + S-adenosyl-L-methionine = a 5-methoxy-2-methyl-3-(all-trans-polyprenyl)benzene-1,4-diol + S-adenosyl-L-homocysteine + H(+). Its pathway is quinol/quinone metabolism; menaquinone biosynthesis; menaquinol from 1,4-dihydroxy-2-naphthoate: step 2/2. It participates in cofactor biosynthesis; ubiquinone biosynthesis. Its function is as follows. Methyltransferase required for the conversion of demethylmenaquinol (DMKH2) to menaquinol (MKH2) and the conversion of 2-polyprenyl-6-methoxy-1,4-benzoquinol (DDMQH2) to 2-polyprenyl-3-methyl-6-methoxy-1,4-benzoquinol (DMQH2). The protein is Ubiquinone/menaquinone biosynthesis C-methyltransferase UbiE of Pseudoalteromonas translucida (strain TAC 125).